Here is a 692-residue protein sequence, read N- to C-terminus: A-kinase anchor protein 8 (692 aa).

Residues 1–195 (MDQGYGGYGA…FMRGRGQGRF (195 aa)) form an interaction with MCM2 region. Residues 1-210 (MDQGYGGYGA…PGTFMRSDPF (210 aa)) form an interaction with DPY30 region. Arginine 109 carries the asymmetric dimethylarginine; alternate modification. Arginine 109 bears the Omega-N-methylarginine; alternate mark. Residues 109–201 (RGGSGGGGEG…QGRFQDRSNP (93 aa)) form an interaction with DDX5 region. Serine 112 is modified (phosphoserine). Disordered stretches follow at residues 168-203 (GQYS…NPGT), 231-254 (GGRG…SMAP), and 269-382 (STMP…RTRD). Residues 172 to 182 (ECRDPARERGS) are compositionally biased toward basic and acidic residues. Serine 199 is subject to Phosphoserine. Omega-N-methylarginine is present on residues arginine 233 and arginine 277. 2 stretches are compositionally biased toward basic and acidic residues: residues 281–297 (RMRD…DRFG) and 314–323 (PDTKLARVDS). A Bipartite nuclear localization signal motif is present at residues 289-306 (KRRGFDRFGPDGTGRKRK). A Glycyl lysine isopeptide (Lys-Gly) (interchain with G-Cter in SUMO2) cross-link involves residue lysine 317. A phosphoserine mark is found at serine 323, serine 328, and serine 339. The span at 324–334 (EGDFSENDDAA) shows a compositional bias: acidic residues. The segment at 387 to 450 (RIQFACSVCK…NKKIEKRRQE (64 aa)) is involved in chromatin-binding. 2 C2H2 AKAP95-type zinc fingers span residues 392–414 (CSVC…SKFH) and 481–504 (CLAC…SVDH). The interval 525 to 569 (SVLNNRHIVKMLEKYLKGEDPFTSETVDPEMEGDDNLGGEDKKET) is involved in condensin complex recruitment. The segment at 545–571 (PFTSETVDPEMEGDDNLGGEDKKETPE) is disordered. Positions 551–562 (VDPEMEGDDNLG) are enriched in acidic residues. Residue lysine 567 forms a Glycyl lysine isopeptide (Lys-Gly) (interchain with G-Cter in SUMO2) linkage. Positions 572-589 (EVAADVLAEVITAAVRAV) are RII-binding. The tract at residues 576-593 (DVLAEVITAAVRAVDGEG) is required for interaction with MYCBP. A disordered region spans residues 592 to 692 (EGAPAPESSG…AESKDAVPTE (101 aa)). The segment covering 634–646 (AHEKGVPKARSEA) has biased composition (basic and acidic residues). Position 662 is a phosphoserine (serine 662). Positions 663 to 675 (AQTRVAPAPAAAD) are enriched in low complexity. A compositionally biased stretch (basic and acidic residues) spans 683–692 (AESKDAVPTE). Residue serine 685 is modified to Phosphoserine.

It belongs to the AKAP95 family. Binds to the PKA RII-alpha regulatory subunit PRKAR2A (phosphorylated at 'Thr-54') during mitosis. Interacts (via C-terminus) with FIGN. Interacts with NCAPD2, CCND1, MCM2, RPS6KA1, PDE4A. Interacts with CCND3, CCNE1, DDX5, CASP3. Interacts with NFKB1; detetcted in the cytoplasm. Interacts with MYCBP; MYCBP is translocated to the nucleus and the interaction prevents the association of the PKA catalytic subunit leading to suppression of PKA activity. Interacts with DPY30; mediating AKAP8 association with at least the MLL4/WBP7 HMT complex. Interacts with HDAC3; increased during mitosis. Interacts with GJA1; in the nucleus and in the nuclear membrane; the nuclear association increases with progress of cell cycle G1, S and G2 phase and decreases in M phase. Phosphorylated on tyrosine residues probably by SRC subfamily protein kinases; multiple phosphorylation is leading to dissociation from nuclear structures implicated in chromatin structural changes. As to expression, highly expressed in heart, liver, skeletal muscle, kidney and pancreas. Expressed in mature dendritic cells.

Its subcellular location is the nucleus. The protein resides in the nucleus matrix. The protein localises to the nucleolus. It is found in the cytoplasm. Anchoring protein that mediates the subcellular compartmentation of cAMP-dependent protein kinase (PKA type II). Acts as an anchor for a PKA-signaling complex onto mitotic chromosomes, which is required for maintenance of chromosomes in a condensed form throughout mitosis. Recruits condensin complex subunit NCAPD2 to chromosomes required for chromatin condensation; the function appears to be independent from PKA-anchoring. May help to deliver cyclin D/E to CDK4 to facilitate cell cycle progression. Required for cell cycle G2/M transition and histone deacetylation during mitosis. In mitotic cells recruits HDAC3 to the vicinity of chromatin leading to deacetylation and subsequent phosphorylation at 'Ser-10' of histone H3; in this function may act redundantly with AKAP8L. Involved in nuclear retention of RPS6KA1 upon ERK activation thus inducing cell proliferation. May be involved in regulation of DNA replication by acting as scaffold for MCM2. Enhances HMT activity of the KMT2 family MLL4/WBP7 complex and is involved in transcriptional regulation. In a teratocarcinoma cell line is involved in retinoic acid-mediated induction of developmental genes implicating H3 'Lys-4' methylation. May be involved in recruitment of active CASP3 to the nucleus in apoptotic cells. May act as a carrier protein of GJA1 for its transport to the nucleus. May play a repressive role in the regulation of rDNA transcription. Preferentially binds GC-rich DNA in vitro. In cells, associates with ribosomal RNA (rRNA) chromatin, preferentially with rRNA promoter and transcribed regions. Involved in modulation of Toll-like receptor signaling. Required for the cAMP-dependent suppression of TNF-alpha in early stages of LPS-induced macrophage activation; the function probably implicates targeting of PKA to NFKB1. The chain is A-kinase anchor protein 8 (AKAP8) from Homo sapiens (Human).